A 1357-amino-acid polypeptide reads, in one-letter code: DNA-directed RNA polymerase subunit beta (1357 aa).

The protein belongs to the RNA polymerase beta chain family. As to quaternary structure, the RNAP catalytic core consists of 2 alpha, 1 beta, 1 beta' and 1 omega subunit. When a sigma factor is associated with the core the holoenzyme is formed, which can initiate transcription.

It catalyses the reaction RNA(n) + a ribonucleoside 5'-triphosphate = RNA(n+1) + diphosphate. Functionally, DNA-dependent RNA polymerase catalyzes the transcription of DNA into RNA using the four ribonucleoside triphosphates as substrates. The polypeptide is DNA-directed RNA polymerase subunit beta (Pseudomonas fluorescens (strain SBW25)).